Here is an 864-residue protein sequence, read N- to C-terminus: MDEVKKYGKTLEEIEGELMFGKISFMLFLFHCIFSDDFPESLADSDEEHNIFDDEFDAANDETFGGGLDNIGENAEQVNCLVRAYHSLFFQTARLRLDDPVWHHPSSSDQVAPDASAIPFPTFGNGDSSDTFKSSFEAESPFLKKSIWGNGADSSFNIWGSDFGIAAVPPSSSFDLDYNSIAPNEAQQVSPLVQQKPSSQIPSMPSSALTVTCLLYHEFLNLISFKLEDFERMQLGDSTDTLTAALNDLQLGSTNAQSKIEQAPTTLQSAPGEPLKAQTLPKLPVSALSLEELEQKIIRESQTVNVANTQQTPQGSNRFAHPPPGFTANMKNAQHPAMGPPMGMPGMQMPPPPMGYQQMGAIMQELPRLPPLNPQYLPLVPIWLGAIVNNMQLPMGVPPIPPFLYQLLNHYRNPSLVHAMIVHSSIPPNSRPNGPQFSGPQVGPHSPGARGQQRRNSGMPSTRTIYDLALDSFAGYMSFKEREWLIRIQFVQCKGSGDPCIDDYYYVRWRESQIANGWTAHPKPESKQPLPASSESRKDYLERIRRMNYREMQKERLRDREKERQRERQERIDRGEERKPRQTLTDKFATSLGLPSKSSTHNPRHVLDMKAQVDSVDNQAKKLSDEERKNAVQKKLRTMLLRLEGALVLLMEAEELRRTSSSDKSQFKDLTSEEKEQEVEKRTSLIIDEFMGDDLPKLMQMSKGRAVLTRTLKVVGPRDQARIILSLMIAAGLVSKKMYGEIVLDILPVVHQKVSNLHPDQFKYLVGALNLDNIKRQLMDSNMFVRDVMLTLYLVSVKNNQNLLEWSKQTKFSSLKMPSSAPLGFWRKALSAVTDAEITEFAEDIKYSGVVDCHEVAKLIEQSL.

A compositionally biased stretch (polar residues) spans 427–439 (PPNSRPNGPQFSG). 3 disordered regions span residues 427-460 (PPNS…SGMP), 518-539 (WTAH…SRKD), and 551-602 (EMQK…STHN). Residues 551-580 (EMQKERLRDREKERQRERQERIDRGEERKP) are compositionally biased toward basic and acidic residues.

The protein belongs to the PAT1 family.

It localises to the cytoplasm. Its subcellular location is the P-body. In terms of biological role, RNA-binding protein involved in deadenylation-dependent decapping of mRNAs, leading to the degradation of mRNAs. Acts as a scaffold protein that connects deadenylation and decapping machinery. Required for the recruitment of P-body components such as cgh-1 in somatic blastomeres. May play a role in recruiting the decapping enzyme dcap-1 to cytoplasmic puncta in the cell body of the posterior touch receptor neuron, PLM. The sequence is that of Protein PAT1 homolog 1 (patr-1) from Caenorhabditis briggsae.